An 89-amino-acid chain; its full sequence is Cell division topological specificity factor (89 aa).

This sequence belongs to the MinE family.

Prevents the cell division inhibition by proteins MinC and MinD at internal division sites while permitting inhibition at polar sites. This ensures cell division at the proper site by restricting the formation of a division septum at the midpoint of the long axis of the cell. The sequence is that of Cell division topological specificity factor from Proteus mirabilis (strain HI4320).